Here is a 260-residue protein sequence, read N- to C-terminus: Hydroxyethylthiazole kinase 1 (260 aa).

Methionine 39 provides a ligand contact to substrate. ATP is bound by residues arginine 115 and threonine 160. Substrate is bound at residue glycine 187.

Belongs to the Thz kinase family. Requires Mg(2+) as cofactor.

It catalyses the reaction 5-(2-hydroxyethyl)-4-methylthiazole + ATP = 4-methyl-5-(2-phosphooxyethyl)-thiazole + ADP + H(+). Its pathway is cofactor biosynthesis; thiamine diphosphate biosynthesis; 4-methyl-5-(2-phosphoethyl)-thiazole from 5-(2-hydroxyethyl)-4-methylthiazole: step 1/1. Catalyzes the phosphorylation of the hydroxyl group of 4-methyl-5-beta-hydroxyethylthiazole (THZ). In Streptococcus pneumoniae serotype 2 (strain D39 / NCTC 7466), this protein is Hydroxyethylthiazole kinase 1.